Consider the following 284-residue polypeptide: D-tagatose-1,6-bisphosphate aldolase subunit GatY (284 aa).

Aspartate 82 functions as the Proton donor in the catalytic mechanism. Zn(2+)-binding residues include histidine 83 and histidine 180. Glycine 181 contributes to the dihydroxyacetone phosphate binding site. Histidine 208 is a Zn(2+) binding site. Dihydroxyacetone phosphate-binding positions include 209–211 (GAS) and 230–233 (NVAT).

Belongs to the class II fructose-bisphosphate aldolase family. TagBP aldolase GatY subfamily. As to quaternary structure, forms a complex with GatZ. Requires Zn(2+) as cofactor.

The catalysed reaction is D-tagatofuranose 1,6-bisphosphate = D-glyceraldehyde 3-phosphate + dihydroxyacetone phosphate. It functions in the pathway carbohydrate metabolism; D-tagatose 6-phosphate degradation; D-glyceraldehyde 3-phosphate and glycerone phosphate from D-tagatose 6-phosphate: step 2/2. Catalytic subunit of the tagatose-1,6-bisphosphate aldolase GatYZ, which catalyzes the reversible aldol condensation of dihydroxyacetone phosphate (DHAP or glycerone-phosphate) with glyceraldehyde 3-phosphate (G3P) to produce tagatose 1,6-bisphosphate (TBP). Requires GatZ subunit for full activity and stability. Is involved in the catabolism of galactitol. The sequence is that of D-tagatose-1,6-bisphosphate aldolase subunit GatY from Salmonella newport (strain SL254).